The chain runs to 362 residues: Putative F-box/kelch-repeat protein At3g20710 (362 aa).

The F-box domain maps to Met-1–Ala-50. Kelch repeat units lie at residues Tyr-150–Asn-201 and Ile-293–Ser-341.

The sequence is that of Putative F-box/kelch-repeat protein At3g20710 from Arabidopsis thaliana (Mouse-ear cress).